The sequence spans 144 residues: 3-hydroxyacyl-[acyl-carrier-protein] dehydratase FabZ (144 aa).

Histidine 51 is an active-site residue.

It belongs to the thioester dehydratase family. FabZ subfamily.

The protein resides in the cytoplasm. It carries out the reaction a (3R)-hydroxyacyl-[ACP] = a (2E)-enoyl-[ACP] + H2O. Functionally, involved in unsaturated fatty acids biosynthesis. Catalyzes the dehydration of short chain beta-hydroxyacyl-ACPs and long chain saturated and unsaturated beta-hydroxyacyl-ACPs. In Clostridium botulinum (strain 657 / Type Ba4), this protein is 3-hydroxyacyl-[acyl-carrier-protein] dehydratase FabZ.